Here is a 78-residue protein sequence, read N- to C-terminus: Apolipoprotein C-I (78 aa).

A signal peptide spans 1–26 (MRLILWLPVLVVVLLMVTEGPAPAQG).

This sequence belongs to the apolipoprotein C1 family.

It is found in the secreted. Inhibitor of lipoprotein binding to the low density lipoprotein (LDL) receptor, LDL receptor-related protein, and very low density lipoprotein (VLDL) receptor. Associates with high density lipoproteins (HDL) and the triacylglycerol-rich lipoproteins in the plasma and makes up about 10% of the protein of the VLDL and 2% of that of HDL. Appears to interfere directly with fatty acid uptake and is also the major plasma inhibitor of cholesteryl ester transfer protein (CETP). Binds free fatty acids and reduces their intracellular esterification. Modulates the interaction of APOE with beta-migrating VLDL and inhibits binding of beta-VLDL to the LDL receptor-related protein. The sequence is that of Apolipoprotein C-I (APOC1) from Panthera tigris altaica (Siberian tiger).